A 542-amino-acid chain; its full sequence is Putative inactive cadmium/zinc-transporting ATPase HMA3 (542 aa).

Residues 1 to 89 (MAEGEESKKM…VRPYGETSLK (89 aa)) lie on the Cytoplasmic side of the membrane. Positions 13–79 (QTSYFDVVGI…ALNQARLEAS (67 aa)) constitute an HMA domain. Residues 90-111 (SQWPSPFAIVSGVLLVLSFFKY) form a helical membrane-spanning segment. Residues 112 to 114 (FYS) lie on the Extracellular side of the membrane. Residues 115–134 (PLEWLAIVAVVAGVFPILAK) traverse the membrane as a helical segment. Over 135 to 141 (AVASVTR) the chain is Cytoplasmic. The chain crosses the membrane as a helical span at residues 142–162 (FRLDINALTLIAVIATLCMQD). Position 163 (Phe163) is a topological domain, extracellular. The chain crosses the membrane as a helical span at residues 164-184 (TEAATIVFLFSVADWLESSAA). Residues 185–310 (HKASIVMSSL…QTKTQRFIDK (126 aa)) are Cytoplasmic-facing. A helical membrane pass occupies residues 311 to 333 (CSRYYTPAVVVSAACFAVIPVLL). At 334–341 (KVQDLSHW) the chain is on the extracellular side. The chain crosses the membrane as a helical span at residues 342-359 (FHLALVVLVSGCPCGLIL). The Cytoplasmic segment spans residues 360 to 542 (STPVATFCAL…VAQALKELKS (183 aa)).

The protein belongs to the cation transport ATPase (P-type) (TC 3.A.3) family. Type IB subfamily.

It is found in the membrane. The chain is Putative inactive cadmium/zinc-transporting ATPase HMA3 (HMA3) from Arabidopsis thaliana (Mouse-ear cress).